The following is a 327-amino-acid chain: Methionine import ATP-binding protein MetN (327 aa).

In terms of domain architecture, ABC transporter spans 3–239 (VELKNIEKIY…PKHAVTKELL (237 aa)). ATP is bound at residue 36-43 (GYSGAGKS).

Belongs to the ABC transporter superfamily. Methionine importer (TC 3.A.1.24) family. As to quaternary structure, the complex is composed of two ATP-binding proteins (MetN), two transmembrane proteins (MetI) and a solute-binding protein (MetQ).

It is found in the cell inner membrane. The catalysed reaction is L-methionine(out) + ATP + H2O = L-methionine(in) + ADP + phosphate + H(+). It carries out the reaction D-methionine(out) + ATP + H2O = D-methionine(in) + ADP + phosphate + H(+). Part of the ABC transporter complex MetNIQ involved in methionine import. Responsible for energy coupling to the transport system. The sequence is that of Methionine import ATP-binding protein MetN from Helicobacter pylori (strain J99 / ATCC 700824) (Campylobacter pylori J99).